The chain runs to 191 residues: Ribosomal RNA small subunit methyltransferase G (191 aa).

S-adenosyl-L-methionine-binding positions include G59, 111 to 112 (IE), and R124.

This sequence belongs to the methyltransferase superfamily. RNA methyltransferase RsmG family.

Its subcellular location is the cytoplasm. In terms of biological role, specifically methylates the N7 position of a guanine in 16S rRNA. This chain is Ribosomal RNA small subunit methyltransferase G, found in Mycoplasma pneumoniae (strain ATCC 29342 / M129 / Subtype 1) (Mycoplasmoides pneumoniae).